The primary structure comprises 281 residues: Urease accessory protein UreD (281 aa).

Positions 1 to 25 (MLNTLEPQPCETDALSPRLQRSTGS) are disordered.

The protein belongs to the UreD family. UreD, UreF and UreG form a complex that acts as a GTP-hydrolysis-dependent molecular chaperone, activating the urease apoprotein by helping to assemble the nickel containing metallocenter of UreC. The UreE protein probably delivers the nickel.

It is found in the cytoplasm. Its function is as follows. Required for maturation of urease via the functional incorporation of the urease nickel metallocenter. This chain is Urease accessory protein UreD, found in Dinoroseobacter shibae (strain DSM 16493 / NCIMB 14021 / DFL 12).